Here is a 321-residue protein sequence, read N- to C-terminus: Peroxidase 4 (321 aa).

Residues 1 to 25 (MASSSFSIVVVALGVLALFAGSSSA) form the signal peptide. Gln26 is subject to Pyrrolidone carboxylic acid. Intrachain disulfides connect Cys36/Cys116, Cys69/Cys74, Cys122/Cys317, and Cys201/Cys226. Catalysis depends on His67, which acts as the Proton acceptor. The Ca(2+) site is built by Asp68, Val71, Gly73, Asp75, and Ser77. Pro164 is a binding site for substrate. His194 contributes to the heme b binding site. Thr195 provides a ligand contact to Ca(2+). Residue Asn210 is glycosylated (N-linked (GlcNAc...) asparagine). Positions 241, 244, and 249 each coordinate Ca(2+).

This sequence belongs to the peroxidase family. Classical plant (class III) peroxidase subfamily. Requires heme b as cofactor. Ca(2+) is required as a cofactor.

The protein localises to the secreted. The enzyme catalyses 2 a phenolic donor + H2O2 = 2 a phenolic radical donor + 2 H2O. In terms of biological role, removal of H(2)O(2), oxidation of toxic reductants, biosynthesis and degradation of lignin, suberization, auxin catabolism, response to environmental stresses such as wounding, pathogen attack and oxidative stress. These functions might be dependent on each isozyme/isoform in each plant tissue. The protein is Peroxidase 4 of Vitis vinifera (Grape).